We begin with the raw amino-acid sequence, 62 residues long: Large ribosomal subunit protein bL33 (62 aa).

The protein belongs to the bacterial ribosomal protein bL33 family.

The sequence is that of Large ribosomal subunit protein bL33 from Cyanothece sp. (strain PCC 7425 / ATCC 29141).